A 240-amino-acid polypeptide reads, in one-letter code: PF03932 family protein CutC (240 aa).

It belongs to the CutC family.

It localises to the cytoplasm. This Xanthomonas campestris pv. campestris (strain 8004) protein is PF03932 family protein CutC.